Here is a 315-residue protein sequence, read N- to C-terminus: Porphobilinogen deaminase (315 aa).

The residue at position 251 (C251) is an S-(dipyrrolylmethanemethyl)cysteine.

This sequence belongs to the HMBS family. As to quaternary structure, monomer. It depends on dipyrromethane as a cofactor.

It catalyses the reaction 4 porphobilinogen + H2O = hydroxymethylbilane + 4 NH4(+). It participates in porphyrin-containing compound metabolism; protoporphyrin-IX biosynthesis; coproporphyrinogen-III from 5-aminolevulinate: step 2/4. Its function is as follows. Tetrapolymerization of the monopyrrole PBG into the hydroxymethylbilane pre-uroporphyrinogen in several discrete steps. This Sphingopyxis alaskensis (strain DSM 13593 / LMG 18877 / RB2256) (Sphingomonas alaskensis) protein is Porphobilinogen deaminase.